We begin with the raw amino-acid sequence, 384 residues long: MSEYSVFTSESVSEGHPDKMADQISDAVLDAILTDDPNARVAVETLVKTGMAIVAGEVRTSTYVDLEDLIRQVILDIGYNSSDVGFDGASCAVLNAIGKQSADIAMGVDEGDQKDLGAGDQGLMFGYATNETAVLMPAPIFYAHRLVEKQAQLRKSGELPWLRPDAKSQVTLRYENGKPVAVDAVVLSTQHSPSVQQAEIHEAVRELIIKNVLPAEWLHKDTQYHINPTGQFIIGGPVGDCGLTGRKIIVDSYGGMARHGGGAFSGKDPSKVDRSAAYAGRYVAKNIVAAGLADKCEIQVSYAIGVAEPTSISINTFGTGKLPDAEIIKLVREHFDLRPRGLIEMLNLKRPIYRQTAAYGHFGRELPDFTWEKTDKADALKKAL.

Histidine 16 contacts ATP. A Mg(2+)-binding site is contributed by aspartate 18. A K(+)-binding site is contributed by glutamate 44. Residues glutamate 57 and glutamine 100 each contribute to the L-methionine site. The interval 100-110 (QSADIAMGVDE) is flexible loop. ATP-binding positions include 165-167 (DAK), aspartate 240, 246-247 (RK), alanine 263, and lysine 267. Position 240 (aspartate 240) interacts with L-methionine. L-methionine is bound at residue lysine 271.

This sequence belongs to the AdoMet synthase family. In terms of assembly, homotetramer; dimer of dimers. It depends on Mg(2+) as a cofactor. The cofactor is K(+).

It is found in the cytoplasm. It carries out the reaction L-methionine + ATP + H2O = S-adenosyl-L-methionine + phosphate + diphosphate. It participates in amino-acid biosynthesis; S-adenosyl-L-methionine biosynthesis; S-adenosyl-L-methionine from L-methionine: step 1/1. Functionally, catalyzes the formation of S-adenosylmethionine (AdoMet) from methionine and ATP. The overall synthetic reaction is composed of two sequential steps, AdoMet formation and the subsequent tripolyphosphate hydrolysis which occurs prior to release of AdoMet from the enzyme. The sequence is that of S-adenosylmethionine synthase from Cellvibrio japonicus (strain Ueda107) (Pseudomonas fluorescens subsp. cellulosa).